The following is a 583-amino-acid chain: ATP-dependent lipid A-core flippase (583 aa).

7 helical membrane-spanning segments follow: residues 18-38, 65-85, 105-127, 143-163, 167-187, 252-272, and 277-297; these read LWPIINPFKIGLIIASITLII, IFMWMPLVLMGLMIMRGMSGF, LLFNHIMNMPVSFFIEQSTATLM, GALITIIREGASVVGLCIMMF, WQLSLVLILIMPIISIIIKLV, VFEPLIQFVASLALACVLYIA, and VIEMLSAGTITVIFSSMIALM. Residues 30 to 312 form the ABC transmembrane type-1 domain; it reads IIASITLIIN…LTNVSAQFQR (283 aa). One can recognise an ABC transporter domain in the interval 344–580; it reads IIFDNVTFFY…KGVYSQLYKF (237 aa). 378–385 provides a ligand contact to ATP; the sequence is GRSGSGKS.

This sequence belongs to the ABC transporter superfamily. Lipid exporter (TC 3.A.1.106) family. As to quaternary structure, homodimer.

The protein localises to the cell inner membrane. It carries out the reaction ATP + H2O + lipid A-core oligosaccharideSide 1 = ADP + phosphate + lipid A-core oligosaccharideSide 2.. Involved in lipopolysaccharide (LPS) biosynthesis. Translocates lipid A-core from the inner to the outer leaflet of the inner membrane. Transmembrane domains (TMD) form a pore in the inner membrane and the ATP-binding domain (NBD) is responsible for energy generation. This Blochmanniella floridana protein is ATP-dependent lipid A-core flippase.